The sequence spans 618 residues: DNA ligase 2 (618 aa).

The segment covering D197–K208 has biased composition (basic and acidic residues). The segment at D197–S250 is disordered. Positions P216–V234 are enriched in polar residues. Residue E312 participates in ATP binding. Residue K314 is the N6-AMP-lysine intermediate of the active site. The ATP site is built by R319, R334, E363, F403, R476, and K482. The interval H459 to W480 is disordered.

The protein belongs to the ATP-dependent DNA ligase family. Requires Mg(2+) as cofactor.

It catalyses the reaction ATP + (deoxyribonucleotide)n-3'-hydroxyl + 5'-phospho-(deoxyribonucleotide)m = (deoxyribonucleotide)n+m + AMP + diphosphate.. DNA ligase that seals nicks in double-stranded DNA during DNA replication, DNA recombination and DNA repair. This is DNA ligase 2 from Haloquadratum walsbyi (strain DSM 16790 / HBSQ001).